A 314-amino-acid chain; its full sequence is Olfactory receptor 51I1 (314 aa).

The Extracellular segment spans residues 1–27 (MLGLNGTPFQPATLQLTGIPGIQTGLT). The chain crosses the membrane as a helical span at residues 28 to 48 (WVALIFCILYMISIVGNLSIL). The Cytoplasmic segment spans residues 49 to 56 (TLVFWEPA). The helical transmembrane segment at 57–77 (LHQPMYYFLSMLALNDLGVSF) threads the bilayer. Over 78–101 (STLPTVISTFCFNYNHVAFNACLV) the chain is Extracellular. Cys-99 and Cys-191 form a disulfide bridge. Residues 102 to 122 (QMFFIHTFSFMESGILLAMSL) form a helical membrane-spanning segment. Topologically, residues 123–141 (DRFVAICYPLRYVTVLTHN) are cytoplasmic. A helical transmembrane segment spans residues 142–162 (RILAMGLGILTKSFTTLFPFP). Residues 163 to 198 (FVVKRLPFCKGNVLHHSYCLHPDLMKVACGDIHVNN) lie on the Extracellular side of the membrane. Residues 199–219 (IYGLLVIIFTYGMDSTFILLS) form a helical membrane-spanning segment. At 220 to 239 (YALILRAMLVIISQEQRLKA) the chain is on the cytoplasmic side. Residues 240-260 (LNTCMSHICAVLAFYVPIIAV) form a helical membrane-spanning segment. At 261–275 (SMIHRFWKSAPPVVH) the chain is on the extracellular side. Residues 276–296 (VMMSNVYLFVPPMLNPIIYSV) traverse the membrane as a helical segment. Topologically, residues 297–314 (KTKEIRKGILKFFHKSQA) are cytoplasmic.

It belongs to the G-protein coupled receptor 1 family.

Its subcellular location is the cell membrane. Its function is as follows. Odorant receptor. The protein is Olfactory receptor 51I1 (OR51I1) of Homo sapiens (Human).